The sequence spans 319 residues: tRNA uridine(34) hydroxylase (319 aa).

A Rhodanese domain is found at 124-218 (LDEDTVILDA…YGKNEETKGE (95 aa)). Cys-178 serves as the catalytic Cysteine persulfide intermediate.

Belongs to the TrhO family.

The catalysed reaction is uridine(34) in tRNA + AH2 + O2 = 5-hydroxyuridine(34) in tRNA + A + H2O. In terms of biological role, catalyzes oxygen-dependent 5-hydroxyuridine (ho5U) modification at position 34 in tRNAs. This chain is tRNA uridine(34) hydroxylase, found in Listeria welshimeri serovar 6b (strain ATCC 35897 / DSM 20650 / CCUG 15529 / CIP 8149 / NCTC 11857 / SLCC 5334 / V8).